Here is a 117-residue protein sequence, read N- to C-terminus: Small ribosomal subunit protein uS12c (117 aa).

A disordered region spans residues 9–40 (RNARQPIENRKKSPALRGCPQRRGTITPKKPN).

This sequence belongs to the universal ribosomal protein uS12 family. As to quaternary structure, part of the 30S ribosomal subunit.

It is found in the plastid. Its subcellular location is the chloroplast. In terms of biological role, with S4 and S5 plays an important role in translational accuracy. Located at the interface of the 30S and 50S subunits. This chain is Small ribosomal subunit protein uS12c (rps12), found in Pinus koraiensis (Korean pine).